A 185-amino-acid polypeptide reads, in one-letter code: piRNA-mediated silencing protein C19orf84 homolog (185 aa).

Disordered stretches follow at residues 1–38 (MDELEDGALSNGDNLSLPSAGTESWPTSATPGLPPSLL) and 93–185 (HIWP…EADY). Polar residues predominate over residues 11–25 (NGDNLSLPSAGTESW). The span at 26–38 (PTSATPGLPPSLL) shows a compositional bias: low complexity. Basic residues predominate over residues 118–130 (RPSRGWGRGRGRG). A compositionally biased stretch (basic and acidic residues) spans 139 to 150 (GPERAEERERNM).

Interacts with SPOCD1.

The protein resides in the nucleus. It localises to the nucleoplasm. Functionally, protein adapter involved in piRNA-directed transposon methylation by connecting PIWIL4-piRNA and DNA methylation machineries. The PIWIL4-piRNA pathway plays a central role during spermatogenesis by directing transposon DNA methylation and silencing, thereby preventing their mobilization, which is essential for the germline integrity. The polypeptide is piRNA-mediated silencing protein C19orf84 homolog (Mus musculus (Mouse)).